The chain runs to 363 residues: Neutral protease 2 homolog NFIA_102630 (363 aa).

Positions 1–19 (MKVTVLASAILALINGALA) are cleaved as a signal peptide. The propeptide occupies 20-172 (LPANAPTLDV…PQAIKLLDRR (153 aa)). Disulfide bonds link Cys-178–Cys-250 and Cys-257–Cys-275. His-300 provides a ligand contact to Zn(2+). The active site involves Glu-301. Residues His-304 and Asp-315 each contribute to the Zn(2+) site.

This sequence belongs to the peptidase M35 family. It depends on Zn(2+) as a cofactor.

It localises to the secreted. The enzyme catalyses Preferential cleavage of bonds with hydrophobic residues in P1'. Also 3-Asn-|-Gln-4 and 8-Gly-|-Ser-9 bonds in insulin B chain.. In terms of biological role, secreted metalloproteinase that allows assimilation of proteinaceous substrates. Shows high activities on basic nuclear substrates such as histone and protamine. The polypeptide is Neutral protease 2 homolog NFIA_102630 (Neosartorya fischeri (strain ATCC 1020 / DSM 3700 / CBS 544.65 / FGSC A1164 / JCM 1740 / NRRL 181 / WB 181) (Aspergillus fischerianus)).